Consider the following 364-residue polypeptide: Protein BRI1-5 ENHANCED 1 (364 aa).

Over residues 1–11 the composition is skewed to acidic residues; sequence MVREEQEEDDN. A disordered region spans residues 1–22; that stretch reads MVREEQEEDDNNNNNNGGGERK. NADP(+) is bound by residues 44 to 49, arginine 69, 98 to 99, tyrosine 202, lysine 206, valine 232, and serine 244; these read GGSGFV and DL. Catalysis depends on lysine 206, which acts as the Proton donor.

It belongs to the NAD(P)-dependent epimerase/dehydratase family. As to quaternary structure, monomer. In terms of tissue distribution, mainly present in cell elongating-containing tissues. Strongly expressed in roots and flowers, also observed in petioles, stems, leaves and siliques.

The protein localises to the cytoplasm. The protein operates within plant hormone biosynthesis; brassinosteroid biosynthesis. Element of the brassinosteroid metabolic pathway that regulates typhasterol (TY), castasterone (CS) and brassinolide (BL) levels. Involved in the control of organ elongation. This chain is Protein BRI1-5 ENHANCED 1, found in Arabidopsis thaliana (Mouse-ear cress).